Consider the following 422-residue polypeptide: MNERLNLADLKAKTPADLLAMAEEWEIENAPSMRKGEMMFSILKEHAEEGYEVGGDGVLEVLQDGFGFLRSPEANYLPGPDDIYVSPEILRQFSLRTGDTIEGVIVAPRENERYFSLTRVTKINFDDPERARHKVHFDNLTPLYPDERLKMEVDDPTMKDRSARIIDLVAPIGKGQRGLIVAPPRTGKTVLLQNIAHSIATNHPECYLIVLLIDERPEEVTDMQRSVKGEVVSSTFDEPATRHVAVAEMVIEKAKRLVEHKRDVVILLDSITRLGRAFNTVVPSSGKVLTGGVDANALQRPKRFFGAARNIEEGGSLTIIATALIDTGSRMDEVIFEEFKGTGNSEIVLDRKVADKRVFPAMDILKSGTRKEDLLVDKSDLQKTYVLRRILNPMGTTDAIEFLISKLRQTKSNAEFFDSMNT.

The region spanning 52–127 (EVGGDGVLEV…TRVTKINFDD (76 aa)) is the Rho RNA-BD domain. Residues 173 to 178 (GKGQRG), 185 to 190 (RTGKTV), and Arg-216 each bind ATP.

This sequence belongs to the Rho family. In terms of assembly, homohexamer. The homohexamer assembles into an open ring structure.

In terms of biological role, facilitates transcription termination by a mechanism that involves Rho binding to the nascent RNA, activation of Rho's RNA-dependent ATPase activity, and release of the mRNA from the DNA template. The polypeptide is Transcription termination factor Rho (Cereibacter sphaeroides (strain ATCC 17023 / DSM 158 / JCM 6121 / CCUG 31486 / LMG 2827 / NBRC 12203 / NCIMB 8253 / ATH 2.4.1.) (Rhodobacter sphaeroides)).